We begin with the raw amino-acid sequence, 207 residues long: Large ribosomal subunit protein uL4 (207 aa).

Positions Phe56–Ser77 are disordered. Over residues Lys63–Ser77 the composition is skewed to basic residues.

This sequence belongs to the universal ribosomal protein uL4 family. In terms of assembly, part of the 50S ribosomal subunit.

One of the primary rRNA binding proteins, this protein initially binds near the 5'-end of the 23S rRNA. It is important during the early stages of 50S assembly. It makes multiple contacts with different domains of the 23S rRNA in the assembled 50S subunit and ribosome. In terms of biological role, forms part of the polypeptide exit tunnel. The polypeptide is Large ribosomal subunit protein uL4 (Phytoplasma australiense).